The sequence spans 2167 residues: Glutamate synthase 1 [NADH], chloroplastic (2167 aa).

Positions 1–31 (MSAAQGMAYKLRTDAAPTGAGRRARRSHSSV) are disordered. Residues 1-36 (MSAAQGMAYKLRTDAAPTGAGRRARRSHSSVAAPYR) constitute a chloroplast transit peptide. The active-site Nucleophile is cysteine 100. A Glutamine amidotransferase type-2 domain is found at 100-504 (CGVGFVAELS…PGMMLLVDFE (405 aa)). Residues 1022–1042 (KSNTGEGGEQPSRMEPLANGS) are disordered. 1192-1249 (LAETHQTLVANGLRGRAILQTDGQLKTGKDVAVACLLGAEEFGFSTAPLITLGCIMMR) lines the FMN pocket. [3Fe-4S] cluster contacts are provided by cysteine 1245, cysteine 1251, and cysteine 1256. Residue 1956–1970 (GGGDTGTDCIGTSIR) coordinates NAD(+).

It belongs to the glutamate synthase family. As to quaternary structure, monomer. Requires [3Fe-4S] cluster as cofactor. FAD is required as a cofactor. The cofactor is FMN. As to expression, highly expressed in roots.

It localises to the plastid. It is found in the chloroplast. It catalyses the reaction 2 L-glutamate + NAD(+) = L-glutamine + 2-oxoglutarate + NADH + H(+). Its pathway is amino-acid biosynthesis; L-glutamate biosynthesis via GLT pathway; L-glutamate from 2-oxoglutarate and L-glutamine (NAD(+) route): step 1/1. It participates in energy metabolism; nitrogen metabolism. In terms of biological role, involved in glutamate biosynthesis and plays a major role in the primary ammonium ions assimilation in seedling roots. May be involved in the reutilization of glutamine in developing organs. Plays a role in the development of tillers. This Oryza sativa subsp. japonica (Rice) protein is Glutamate synthase 1 [NADH], chloroplastic.